Reading from the N-terminus, the 301-residue chain is Ribonuclease H2 subunit A (301 aa).

Position 1 is an N-acetylmethionine (methionine 1). The RNase H type-2 domain maps to 28–251 (PCVLGVDEAG…AQAILEKEAE (224 aa)). A divalent metal cation contacts are provided by aspartate 34, glutamate 35, and aspartate 142. A Phosphothreonine modification is found at threonine 217. Acidic residues predominate over residues 255–264 (WEDSEAEEDP). The interval 255-284 (WEDSEAEEDPERPGKITSYFSQGPQTCRPQ) is disordered. A Phosphoserine modification is found at serine 258. Over residues 272–282 (SYFSQGPQTCR) the composition is skewed to polar residues.

Belongs to the RNase HII family. Eukaryotic subfamily. In terms of assembly, the RNase H2 complex is a heterotrimer composed of the catalytic subunit RNASEH2A and the non-catalytic subunits RNASEH2B and RNASEH2C. Mn(2+) is required as a cofactor. Mg(2+) serves as cofactor.

The protein localises to the nucleus. The catalysed reaction is Endonucleolytic cleavage to 5'-phosphomonoester.. In terms of biological role, catalytic subunit of RNase HII, an endonuclease that specifically degrades the RNA of RNA:DNA hybrids. Participates in DNA replication, possibly by mediating the removal of lagging-strand Okazaki fragment RNA primers during DNA replication. Mediates the excision of single ribonucleotides from DNA:RNA duplexes. This chain is Ribonuclease H2 subunit A (Rnaseh2a), found in Mus musculus (Mouse).